The chain runs to 374 residues: MPGAVEGPRWKQAEDIRDIYDFRDVLGTGAFSEVILAEDKRTQKLVAIKCIAKKALEGKEGSMENEIAVLHKIKHPNIVALDDIYESGGHLYLIMQLVSGGELFDRIVEKGFYTERDASRLIFQVLDAVKYLHDLGIVHRDLKPENLLYYSLDEDSKIMISDFGLSKMEDPGSVLSTACGTPGYVAPEVLAQKPYSKAVDCWSIGVIAYILLCGYPPFYDENDAKLFEQILKAEYEFDSPYWDDISDSAKDFIRHLMEKDPEKRFTCEQALQHPWIAGDTALDKNIHQSVSEQIKKNFAKSKWKQAFNATAVVRHMRKLQLGTSQEGQGQTASHGELLTPTAGGPAAGCCCRDCCVEPGSELPPAPPPSSRAMD.

One can recognise a Protein kinase domain in the interval 20–276 (YDFRDVLGTG…CEQALQHPWI (257 aa)). ATP contacts are provided by residues 26–34 (LGTGAFSEV) and K49. Residue K59 forms a Glycyl lysine isopeptide (Lys-Gly) (interchain with G-Cter in ubiquitin) linkage. D141 functions as the Proton acceptor in the catalytic mechanism. Position 177 is a phosphothreonine; by CaMKK1 and CaMKK2 (T177). Positions 263–264 (KR) match the Involved in nuclear import motif. The tract at residues 276 to 316 (IAGDTALDKNIHQSVSEQIKKNFAKSKWKQAFNATAVVRHM) is autoinhibitory domain. Residues 296 to 317 (KNFAKSKWKQAFNATAVVRHMR) are calmodulin-binding. Positions 315–321 (HMRKLQL) match the Nuclear export signal motif.

This sequence belongs to the protein kinase superfamily. CAMK Ser/Thr protein kinase family. CaMK subfamily. In terms of assembly, monomer. Interacts with XPO1. Phosphorylated by CaMKK1 and CaMKK2 on Thr-177. Post-translationally, polybiquitinated by the E3 ubiquitin-protein ligase complex SCF(FBXL12), leading to proteasomal degradation. In terms of tissue distribution, widely expressed.

The protein resides in the cytoplasm. It is found in the nucleus. It carries out the reaction L-seryl-[protein] + ATP = O-phospho-L-seryl-[protein] + ADP + H(+). The enzyme catalyses L-threonyl-[protein] + ATP = O-phospho-L-threonyl-[protein] + ADP + H(+). With respect to regulation, activated by Ca(2+)/calmodulin. Binding of calmodulin results in conformational change that relieves intrasteric autoinhibition and allows phosphorylation of Thr-177 within the activation loop by CaMKK1 or CaMKK2. Phosphorylation of Thr-177 results in several fold increase in total activity. Unlike CaMK4, is unable to exhibit autonomous activity after Ca(2+)/calmodulin activation. Its function is as follows. Calcium/calmodulin-dependent protein kinase that operates in the calcium-triggered CaMKK-CaMK1 signaling cascade and, upon calcium influx, regulates transcription activators activity, cell cycle, hormone production, cell differentiation, actin filament organization and neurite outgrowth. Recognizes the substrate consensus sequence [MVLIF]-x-R-x(2)-[ST]-x(3)-[MVLIF]. Regulates axonal extension and growth cone motility in hippocampal and cerebellar nerve cells. Upon NMDA receptor-mediated Ca(2+) elevation, promotes dendritic growth in hippocampal neurons and is essential in synapses for full long-term potentiation (LTP) and ERK2-dependent translational activation. Downstream of NMDA receptors, promotes the formation of spines and synapses in hippocampal neurons by phosphorylating ARHGEF7/BETAPIX on 'Ser-516', which results in the enhancement of ARHGEF7 activity and activation of RAC1. Promotes neuronal differentiation and neurite outgrowth by activation and phosphorylation of MARK2 on 'Ser-91', 'Ser-92', 'Ser-93' and 'Ser-294'. Promotes nuclear export of HDAC5 and binding to 14-3-3 by phosphorylation of 'Ser-259' and 'Ser-498' in the regulation of muscle cell differentiation. Regulates NUMB-mediated endocytosis by phosphorylation of NUMB on 'Ser-275' and 'Ser-294'. Involved in the regulation of basal and estrogen-stimulated migration of medulloblastoma cells through ARHGEF7/BETAPIX phosphorylation. Is required for proper activation of cyclin-D1/CDK4 complex during G1 progression in diploid fibroblasts. Plays a role in K(+) and ANG2-mediated regulation of the aldosterone synthase (CYP11B2) to produce aldosterone in the adrenal cortex. Phosphorylates EIF4G3/eIF4GII. In vitro phosphorylates CREB1, ATF1, CFTR, MYL9 and SYN1/synapsin I. The sequence is that of Calcium/calmodulin-dependent protein kinase type 1 (Camk1) from Rattus norvegicus (Rat).